Here is a 116-residue protein sequence, read N- to C-terminus: MKLTRASQAPRYVAPAHHEVSTMRLQGREAGRTERFWVGLSVYRPGGTAEPAPTREETVYVVLDGELVVTVDGAETVLGWLDSVHLAKGELRSIHNRTDRQALLLVTVAHPVAEVA.

Residues 40–107 form the Cupin type-2 domain; it reads LSVYRPGGTA…TDRQALLLVT (68 aa).

The protein resides in the secreted. The protein localises to the cell wall. It carries out the reaction Hydrolysis of terminal non-reducing beta-D-galactose residues in beta-D-galactosides.. Beta-galactosidase activity is activated by Mg(2+) and significantly inhibited by Ca(2+), Cd(2+), Fe(2+), Ni(2+), Cu(2+) and Zn(2+). Inhibited by EDTA. Beta-D-galactopyranosidase that specifically recognizes the beta-glycosidic bonds formed with beta-D-galactopyranose (beta-D-Gal) or N-acetylgalactosamine (beta-D-GalNAc). May target the galactoside linkages in the exopolysaccharide component of the mycobacterial extracellular polymeric substance (EPS) and help dispersal of Mtb bacteria from a deteriorating biofilm. The polypeptide is Beta-D-galactosidase Rv1717 (Mycobacterium tuberculosis (strain ATCC 25618 / H37Rv)).